A 345-amino-acid polypeptide reads, in one-letter code: Biotin synthase (345 aa).

A Radical SAM core domain is found at Asn-39–Arg-266. Positions 54, 58, and 61 each coordinate [4Fe-4S] cluster. [2Fe-2S] cluster is bound by residues Cys-98, Cys-129, Cys-189, and Arg-261.

This sequence belongs to the radical SAM superfamily. Biotin synthase family. In terms of assembly, homodimer. [4Fe-4S] cluster serves as cofactor. It depends on [2Fe-2S] cluster as a cofactor.

It carries out the reaction (4R,5S)-dethiobiotin + (sulfur carrier)-SH + 2 reduced [2Fe-2S]-[ferredoxin] + 2 S-adenosyl-L-methionine = (sulfur carrier)-H + biotin + 2 5'-deoxyadenosine + 2 L-methionine + 2 oxidized [2Fe-2S]-[ferredoxin]. It participates in cofactor biosynthesis; biotin biosynthesis; biotin from 7,8-diaminononanoate: step 2/2. Catalyzes the conversion of dethiobiotin (DTB) to biotin by the insertion of a sulfur atom into dethiobiotin via a radical-based mechanism. The sequence is that of Biotin synthase from Idiomarina loihiensis (strain ATCC BAA-735 / DSM 15497 / L2-TR).